Consider the following 256-residue polypeptide: Hydroxyacylglutathione hydrolase (256 aa).

H54, H56, D58, H59, H113, D136, and H174 together coordinate Zn(2+).

This sequence belongs to the metallo-beta-lactamase superfamily. Glyoxalase II family. In terms of assembly, monomer. The cofactor is Zn(2+).

The enzyme catalyses an S-(2-hydroxyacyl)glutathione + H2O = a 2-hydroxy carboxylate + glutathione + H(+). It functions in the pathway secondary metabolite metabolism; methylglyoxal degradation; (R)-lactate from methylglyoxal: step 2/2. Its function is as follows. Thiolesterase that catalyzes the hydrolysis of S-D-lactoyl-glutathione to form glutathione and D-lactic acid. The polypeptide is Hydroxyacylglutathione hydrolase (Cyanothece sp. (strain PCC 7425 / ATCC 29141)).